Reading from the N-terminus, the 124-residue chain is Holo-[acyl-carrier-protein] synthase (124 aa).

Residues Asp-8 and Glu-56 each coordinate Mg(2+).

This sequence belongs to the P-Pant transferase superfamily. AcpS family. Mg(2+) serves as cofactor.

It localises to the cytoplasm. It carries out the reaction apo-[ACP] + CoA = holo-[ACP] + adenosine 3',5'-bisphosphate + H(+). Transfers the 4'-phosphopantetheine moiety from coenzyme A to a Ser of acyl-carrier-protein. The sequence is that of Holo-[acyl-carrier-protein] synthase from Nitratidesulfovibrio vulgaris (strain DP4) (Desulfovibrio vulgaris).